A 148-amino-acid chain; its full sequence is Arginine repressor (148 aa).

This sequence belongs to the ArgR family.

It localises to the cytoplasm. It functions in the pathway amino-acid biosynthesis; L-arginine biosynthesis [regulation]. Functionally, regulates arginine biosynthesis genes. This is Arginine repressor from Chlorobium luteolum (strain DSM 273 / BCRC 81028 / 2530) (Pelodictyon luteolum).